Reading from the N-terminus, the 477-residue chain is Protein RdxB (477 aa).

Topologically, residues 1–29 (MTSPDTQTSSLYAKREPVFPKRVSGKFRS) are cytoplasmic. The chain crosses the membrane as a helical span at residues 30–50 (LKWWIMGVTLGIYYIAPWLRW). At 51 to 81 (DRGPNLPDQAILVDLANRRFFFFMIEIWPHE) the chain is on the periplasmic side. A helical transmembrane segment spans residues 82–102 (FYFVAGLLIMAGLGLFLFTSA). Residues 103–154 (AGRVWCGYACPQTVWTDLFILVERWVEGDRNARIRLLRQRWDLEKTRKYLTK) are Cytoplasmic-facing. The chain crosses the membrane as a helical span at residues 155–175 (WTLWLLIGLATGGAWVFYFTD). Residues 176 to 189 (APTLLVDLLTGNAH) are Periplasmic-facing. Residues 190 to 210 (PVAYITMATLTATTFAFGGFA) form a helical membrane-spanning segment. Over 211–338 (REQICIYACP…SAWRHVFRLR (128 aa)) the chain is Cytoplasmic. In terms of domain architecture, 4Fe-4S ferredoxin-type spans 253-281 (EPLSPDQGDCIDCMACVNVCPMGIDIRDG). 8 residues coordinate [4Fe-4S] cluster: Cys262, Cys265, Cys268, Cys272, Cys286, Cys289, Cys292, and Cys296. Residues 339-359 (TLIYTALWSGVGLALIVALFL) form a helical membrane-spanning segment. Residues 360–477 (RSPIDINVTP…HDTIFNGRGN (118 aa)) are Periplasmic-facing.

[4Fe-4S] cluster serves as cofactor.

The protein resides in the cell membrane. Involved in a membrane generated redox signal; required to maintain repression of photosynthesis gene expression in the presence of oxygen. The polypeptide is Protein RdxB (rdxB) (Cereibacter sphaeroides (strain ATCC 17023 / DSM 158 / JCM 6121 / CCUG 31486 / LMG 2827 / NBRC 12203 / NCIMB 8253 / ATH 2.4.1.) (Rhodobacter sphaeroides)).